A 61-amino-acid chain; its full sequence is Small ribosomal subunit protein uS14 (61 aa).

Zn(2+)-binding residues include cysteine 24, cysteine 27, cysteine 40, and cysteine 43.

It belongs to the universal ribosomal protein uS14 family. Zinc-binding uS14 subfamily. Part of the 30S ribosomal subunit. Contacts proteins S3 and S10. Zn(2+) serves as cofactor.

Binds 16S rRNA, required for the assembly of 30S particles and may also be responsible for determining the conformation of the 16S rRNA at the A site. In Thermobifida fusca (strain YX), this protein is Small ribosomal subunit protein uS14.